The primary structure comprises 435 residues: 4-hydroxy-3-methylbut-2-en-1-yl diphosphate synthase (flavodoxin) (435 aa).

The segment covering 1–15 (MTDVDLRARPQEGMK) has biased composition (basic and acidic residues). A disordered region spans residues 1-24 (MTDVDLRARPQEGMKEIPAGPKGR). Cys316, Cys319, Cys362, and Glu369 together coordinate [4Fe-4S] cluster.

This sequence belongs to the IspG family. Requires [4Fe-4S] cluster as cofactor.

The enzyme catalyses (2E)-4-hydroxy-3-methylbut-2-enyl diphosphate + oxidized [flavodoxin] + H2O + 2 H(+) = 2-C-methyl-D-erythritol 2,4-cyclic diphosphate + reduced [flavodoxin]. The protein operates within isoprenoid biosynthesis; isopentenyl diphosphate biosynthesis via DXP pathway; isopentenyl diphosphate from 1-deoxy-D-xylulose 5-phosphate: step 5/6. Its function is as follows. Converts 2C-methyl-D-erythritol 2,4-cyclodiphosphate (ME-2,4cPP) into 1-hydroxy-2-methyl-2-(E)-butenyl 4-diphosphate. The sequence is that of 4-hydroxy-3-methylbut-2-en-1-yl diphosphate synthase (flavodoxin) from Afipia carboxidovorans (strain ATCC 49405 / DSM 1227 / KCTC 32145 / OM5) (Oligotropha carboxidovorans).